The following is a 448-amino-acid chain: Mitochondrial distribution and morphology protein 10 (448 aa).

This sequence belongs to the MDM10 family. Component of the ER-mitochondria encounter structure (ERMES) or MDM complex, composed of MMM1, MDM10, MDM12 and MDM34. Associates with the mitochondrial outer membrane sorting assembly machinery SAM(core) complex.

The protein resides in the mitochondrion outer membrane. Functionally, component of the ERMES/MDM complex, which serves as a molecular tether to connect the endoplasmic reticulum and mitochondria. Components of this complex are involved in the control of mitochondrial shape and protein biogenesis and may function in phospholipid exchange. MDM10 is involved in the late assembly steps of the general translocase of the mitochondrial outer membrane (TOM complex). Functions in the TOM40-specific route of the assembly of outer membrane beta-barrel proteins, including the association of TOM40 with the receptor TOM22 and small TOM proteins. Can associate with the SAM(core) complex as well as the MDM12-MMM1 complex, both involved in late steps of the major beta-barrel assembly pathway, that is responsible for biogenesis of all outer membrane beta-barrel proteins. May act as a switch that shuttles between both complexes and channels precursor proteins into the TOM40-specific pathway. Plays a role in mitochondrial morphology and in the inheritance of mitochondria. The sequence is that of Mitochondrial distribution and morphology protein 10 from Zygosaccharomyces rouxii (strain ATCC 2623 / CBS 732 / NBRC 1130 / NCYC 568 / NRRL Y-229).